Consider the following 968-residue polypeptide: RNA polymerase-associated protein RapA (968 aa).

The Helicase ATP-binding domain maps to 164 to 334; that stretch reads DVGRRHAPRV…FARLRLLDPN (171 aa). 177–184 contacts ATP; that stretch reads DEVGLGKT. Residues 280–283 carry the DEAH box motif; sequence DEAH. A Helicase C-terminal domain is found at 490-644; that stretch reads RVEWLMGYLT…TCPTGRTVYD (155 aa).

Belongs to the SNF2/RAD54 helicase family. RapA subfamily. As to quaternary structure, interacts with the RNAP. Has a higher affinity for the core RNAP than for the holoenzyme. Its ATPase activity is stimulated by binding to RNAP.

Functionally, transcription regulator that activates transcription by stimulating RNA polymerase (RNAP) recycling in case of stress conditions such as supercoiled DNA or high salt concentrations. Probably acts by releasing the RNAP, when it is trapped or immobilized on tightly supercoiled DNA. Does not activate transcription on linear DNA. Probably not involved in DNA repair. This Klebsiella pneumoniae subsp. pneumoniae (strain ATCC 700721 / MGH 78578) protein is RNA polymerase-associated protein RapA.